The primary structure comprises 202 residues: RYGSPTYFYAFYHHCQSLMKPAWSDAAHGDEVPYVFGVPMVGPTDLFPCNFSKNDVMLSAVVMTYWTNFAKTGDPNKPVPQDTKFIHTKANRFEEVAWSKYNPRDQLYLHIGLKPRVRDHYRATKVAFWKHLVPHLYNLHDMFHYTSTTTKVPLRIPPTAPTSPAGPMARPGAPSGQPSHLPTATRMPRGPGTGTRMQGHSW.

The Extracellular portion of the chain corresponds to Arg-1–Trp-202. Cys-15 and Cys-49 are disulfide-bonded. Asn-50 carries N-linked (GlcNAc...) asparagine glycosylation. Positions Leu-154–Trp-202 are disordered.

Belongs to the type-B carboxylesterase/lipase family. In terms of assembly, homodimer, and heterodimer with NLGN1 and NLGN2. Interacts with neurexins NRXN1, NRXN2 and NRXN3. Interaction with neurexins is mediated by heparan sulfate glycan modification on neurexin. Interacts (via its C-terminus) with DLG4/PSD-95 (via PDZ domain 3).

Its subcellular location is the cell membrane. The protein resides in the synapse. Functionally, cell surface protein involved in cell-cell-interactions via its interactions with neurexin family members. Plays a role in synapse function and synaptic signal transmission, and probably mediates its effects by recruiting and clustering other synaptic proteins. May promote the initial formation of synapses, but is not essential for this. May also play a role in glia-glia or glia-neuron interactions in the developing peripheral nervous system. This Macaca mulatta (Rhesus macaque) protein is Neuroligin-3 (NLGN3).